Here is a 431-residue protein sequence, read N- to C-terminus: Enolase (431 aa).

Gln167 is a binding site for (2R)-2-phosphoglycerate. The active-site Proton donor is Glu209. Mg(2+)-binding residues include Asp246, Glu289, and Asp316. (2R)-2-phosphoglycerate is bound by residues Lys341, Arg370, Ser371, and Lys392. Lys341 (proton acceptor) is an active-site residue.

The protein belongs to the enolase family. As to quaternary structure, component of the RNA degradosome, a multiprotein complex involved in RNA processing and mRNA degradation. Mg(2+) is required as a cofactor.

It is found in the cytoplasm. Its subcellular location is the secreted. The protein resides in the cell surface. The enzyme catalyses (2R)-2-phosphoglycerate = phosphoenolpyruvate + H2O. The protein operates within carbohydrate degradation; glycolysis; pyruvate from D-glyceraldehyde 3-phosphate: step 4/5. In terms of biological role, catalyzes the reversible conversion of 2-phosphoglycerate (2-PG) into phosphoenolpyruvate (PEP). It is essential for the degradation of carbohydrates via glycolysis. In Shewanella pealeana (strain ATCC 700345 / ANG-SQ1), this protein is Enolase.